We begin with the raw amino-acid sequence, 106 residues long: Large ribosomal subunit protein eL42 (106 aa).

Belongs to the eukaryotic ribosomal protein eL42 family.

The chain is Large ribosomal subunit protein eL42 (RPL44) from Eremothecium gossypii (strain ATCC 10895 / CBS 109.51 / FGSC 9923 / NRRL Y-1056) (Yeast).